Reading from the N-terminus, the 457-residue chain is Cysteine--tRNA ligase (457 aa).

Residue Cys-28 participates in Zn(2+) binding. The 'HIGH' region motif lies at 30-40; the sequence is PTVYDTAHIGN. Residues Cys-212, His-237, and Glu-241 each contribute to the Zn(2+) site. Positions 270–274 match the 'KMSKS' region motif; that stretch reads KMSKS. Lys-273 serves as a coordination point for ATP.

Belongs to the class-I aminoacyl-tRNA synthetase family. Monomer. Zn(2+) serves as cofactor.

It localises to the cytoplasm. It carries out the reaction tRNA(Cys) + L-cysteine + ATP = L-cysteinyl-tRNA(Cys) + AMP + diphosphate. This chain is Cysteine--tRNA ligase, found in Wolbachia sp. subsp. Drosophila simulans (strain wRi).